The chain runs to 161 residues: MTKKALFTGSFDPVTNGHLDIIERASYLFDHVYIGLFYNLEKQGYFSIECRKKMLEEAIRQFKNVSVLVAQDRLAVDLAREVGAKYFVRGLRNSQDFDYEANLEFFNKQLADDIETVYLSTSPSLSPISSSRIRELIHFKASVKPFVPKSVVREVEKMSEE.

A substrate-binding site is contributed by Ser-10. Residues 10–11 (SF) and His-18 contribute to the ATP site. Positions 42, 75, and 89 each coordinate substrate. ATP contacts are provided by residues 90 to 92 (GLR), Glu-100, and 125 to 131 (LSPISSS).

This sequence belongs to the bacterial CoaD family. In terms of assembly, homohexamer. Mg(2+) is required as a cofactor.

It is found in the cytoplasm. The enzyme catalyses (R)-4'-phosphopantetheine + ATP + H(+) = 3'-dephospho-CoA + diphosphate. Its pathway is cofactor biosynthesis; coenzyme A biosynthesis; CoA from (R)-pantothenate: step 4/5. Reversibly transfers an adenylyl group from ATP to 4'-phosphopantetheine, yielding dephospho-CoA (dPCoA) and pyrophosphate. This is Phosphopantetheine adenylyltransferase from Streptococcus agalactiae serotype Ia (strain ATCC 27591 / A909 / CDC SS700).